The chain runs to 253 residues: Ubiquinone biosynthesis O-methyltransferase (253 aa).

Residues R47, G78, D99, and M141 each contribute to the S-adenosyl-L-methionine site.

This sequence belongs to the methyltransferase superfamily. UbiG/COQ3 family.

The enzyme catalyses a 3-demethylubiquinol + S-adenosyl-L-methionine = a ubiquinol + S-adenosyl-L-homocysteine + H(+). It catalyses the reaction a 3-(all-trans-polyprenyl)benzene-1,2-diol + S-adenosyl-L-methionine = a 2-methoxy-6-(all-trans-polyprenyl)phenol + S-adenosyl-L-homocysteine + H(+). The protein operates within cofactor biosynthesis; ubiquinone biosynthesis. Its function is as follows. O-methyltransferase that catalyzes the 2 O-methylation steps in the ubiquinone biosynthetic pathway. This chain is Ubiquinone biosynthesis O-methyltransferase, found in Bradyrhizobium diazoefficiens (strain JCM 10833 / BCRC 13528 / IAM 13628 / NBRC 14792 / USDA 110).